Here is a 362-residue protein sequence, read N- to C-terminus: MSLQSIKYQRGSLEILDQLLLPVVSKYLTVRGVEDGWKVINKMQVRGAPAIAIVGCLSLAVEIYPEEFGSKKSLRQEIEGKLNYLVSARPTAVNMKISADELITLANELTKDDNVTVEDMKQRFLNATEAMLEKDIADNRAIGANGAKAILEHVAESASAAAAGPVRVLTHCNTGSLATAGYGTALGVVRHLSELGKLEHVYCTETRPYNQGARLTAYELVHEKLPATLVLDSMVAALLRVKNVAAVVVGADRVAANGDTANKIGTYQIAVVAKHHGVPFYVAAPLTSVDLQIPSGDHIIIEVRPDREMTHVGEHRIAAPGINCWNPAFDVTPASLVTGIITEHGVFKPSALKAEITKLLDL.

Residue D252 is the Proton donor of the active site.

Belongs to the eIF-2B alpha/beta/delta subunits family. MtnA subfamily.

Its subcellular location is the cytoplasm. The protein resides in the nucleus. The enzyme catalyses 5-(methylsulfanyl)-alpha-D-ribose 1-phosphate = 5-(methylsulfanyl)-D-ribulose 1-phosphate. It participates in amino-acid biosynthesis; L-methionine biosynthesis via salvage pathway; L-methionine from S-methyl-5-thio-alpha-D-ribose 1-phosphate: step 1/6. Catalyzes the interconversion of methylthioribose-1-phosphate (MTR-1-P) into methylthioribulose-1-phosphate (MTRu-1-P). The polypeptide is Methylthioribose-1-phosphate isomerase (Drosophila virilis (Fruit fly)).